A 1461-amino-acid chain; its full sequence is Potassium channel K2 (1461 aa).

A run of 6 helical transmembrane segments spans residues 44 to 64, 142 to 162, 183 to 203, 218 to 238, 242 to 262, and 281 to 301; these read IIEG…LIYI, FNYY…YISL, IYNM…MVII, LIDI…IFVF, IDIY…NVSY, and IVLG…TIQA. Positions 322-340 form an intramembrane region, pore-forming; sequence YFYFSIISISTVGYGDIFP. A helical transmembrane segment spans residues 349–369; the sequence is CIIFIFWTFIWVPIQFNDLII. Positions 771 to 794 are disordered; it reads KRDDFDNNNNNNNNNIVKSRKKGR.

In terms of assembly, may form oligomers or interact with other proteins.

The protein resides in the membrane. In terms of biological role, contributes to transmembrane potassium transport. The polypeptide is Potassium channel K2 (Plasmodium falciparum (isolate 3D7)).